A 147-amino-acid chain; its full sequence is MEDRRCDVLFPCSSSVDPRLTEFHGVDNSAQPTTSSEEKPRSKKKKKEREARYAFQTRSQVDILDDGYRWRKYGQKAVKNNPFPRSYYKCTEEGCRVKKQVQRQWGDEGVVVTTYQGVHTHAVDKPSDNFHHILTQMHIFPPFCLKE.

Residues 21–52 (TEFHGVDNSAQPTTSSEEKPRSKKKKKEREAR) form a disordered region. Positions 59–124 (SQVDILDDGY…YQGVHTHAVD (66 aa)) form a DNA-binding region, WRKY. Residues Cys-90, Cys-95, His-119, and His-121 each coordinate Zn(2+).

The protein belongs to the WRKY group I family.

Its subcellular location is the nucleus. In terms of biological role, transcription factor. Interacts specifically with the W box (5'-(T)TGAC[CT]-3'), a frequently occurring elicitor-responsive cis-acting element. In Arabidopsis thaliana (Mouse-ear cress), this protein is Probable WRKY transcription factor 45 (WRKY45).